We begin with the raw amino-acid sequence, 169 residues long: Anaerobic nitrite reductase NSHB2 (169 aa).

One can recognise a Globin domain in the interval 16–166; it reads SFSEEQEALV…LVAAIKQEMK (151 aa). The short motif at 49–53 is the Homodimerization element; sequence EVAPS. Positions 59, 73, 77, 107, 111, and 112 each coordinate heme b. Positions 119–131 match the Homodimerization motif; that stretch reads DAHFEVTRFALLE.

It belongs to the plant globin family. In terms of assembly, homodimer. Heme b serves as cofactor. Expressed in leaves, but not in roots. Present in embryonic organs including embryos, coleoptiles and seminal roots.

Its subcellular location is the cytoplasm. It localises to the nucleus. It carries out the reaction Fe(III)-heme b-[protein] + nitric oxide + H2O = Fe(II)-heme b-[protein] + nitrite + 2 H(+). Phytoglobin that reduces nitrite to nitric oxide under anoxic conditions (e.g. during flooding or in waterlogged soil). May not function as an oxygen storage or transport protein. Has an unusually high affinity for O(2) through an hexacoordinate heme iron because of a very low dissociation constant. Promotes tolerance to low potassium K(+) conditions. This Oryza sativa subsp. japonica (Rice) protein is Anaerobic nitrite reductase NSHB2.